We begin with the raw amino-acid sequence, 464 residues long: Phosphoglucosamine mutase (464 aa).

Ser-112 serves as the catalytic Phosphoserine intermediate. Positions 112, 252, 254, and 256 each coordinate Mg(2+). Ser-112 carries the phosphoserine modification.

This sequence belongs to the phosphohexose mutase family. Mg(2+) is required as a cofactor. In terms of processing, activated by phosphorylation.

The catalysed reaction is alpha-D-glucosamine 1-phosphate = D-glucosamine 6-phosphate. Its function is as follows. Catalyzes the conversion of glucosamine-6-phosphate to glucosamine-1-phosphate. This chain is Phosphoglucosamine mutase, found in Synechococcus sp. (strain CC9605).